Reading from the N-terminus, the 870-residue chain is Aminopeptidase N (870 aa).

Substrate is bound by residues E121 and 261–265 (GAMEN). H297 contacts Zn(2+). E298 (proton acceptor) is an active-site residue. Zn(2+) is bound by residues H301 and E320.

Belongs to the peptidase M1 family. Requires Zn(2+) as cofactor.

The protein localises to the cell inner membrane. The enzyme catalyses Release of an N-terminal amino acid, Xaa-|-Yaa- from a peptide, amide or arylamide. Xaa is preferably Ala, but may be most amino acids including Pro (slow action). When a terminal hydrophobic residue is followed by a prolyl residue, the two may be released as an intact Xaa-Pro dipeptide.. Aminopeptidase N is involved in the degradation of intracellular peptides generated by protein breakdown during normal growth as well as in response to nutrient starvation. The sequence is that of Aminopeptidase N (pepN) from Escherichia coli (strain K12).